The primary structure comprises 1077 residues: Error-prone DNA polymerase (1077 aa).

The protein belongs to the DNA polymerase type-C family. DnaE2 subfamily.

It localises to the cytoplasm. It carries out the reaction DNA(n) + a 2'-deoxyribonucleoside 5'-triphosphate = DNA(n+1) + diphosphate. DNA polymerase involved in damage-induced mutagenesis and translesion synthesis (TLS). It is not the major replicative DNA polymerase. This Brucella abortus biovar 1 (strain 9-941) protein is Error-prone DNA polymerase.